We begin with the raw amino-acid sequence, 239 residues long: Tumor necrosis factor ligand superfamily member 14 (239 aa).

Over methionine 1–valine 37 the chain is Cytoplasmic. A helical; Signal-anchor for type II membrane protein transmembrane segment spans residues serine 38–arginine 58. The Extracellular segment spans residues leucine 59–valine 239. In terms of domain architecture, THD spans proline 92–valine 239. Residue asparagine 100 is glycosylated (N-linked (GlcNAc...) asparagine). Cysteine 152 and cysteine 187 form a disulfide bridge. A glycan (N-linked (GlcNAc...) asparagine) is linked at asparagine 191.

Belongs to the tumor necrosis factor family. Homotrimer. Interacts with TNFRSF14. In terms of processing, the soluble form derives from the membrane form by proteolytic processing.

It localises to the cell membrane. It is found in the secreted. In terms of biological role, cytokine that binds to TNFRSF3/LTBR. Binding to the decoy receptor TNFRSF6B modulates its effects. Activates NFKB and stimulates the proliferation of T-cells. Acts as a ligand for TNFRSF14/HVEM. Upon binding to TNFRSF14/HVEM, delivers costimulatory signals to T cells, leading to T cell proliferation and IFNG production. This Mus musculus (Mouse) protein is Tumor necrosis factor ligand superfamily member 14 (Tnfsf14).